The sequence spans 184 residues: Peptide deformylase (184 aa).

Residues cysteine 98 and histidine 140 each coordinate Fe cation. Glutamate 141 is an active-site residue. Residue histidine 144 participates in Fe cation binding.

This sequence belongs to the polypeptide deformylase family. Fe(2+) serves as cofactor.

The enzyme catalyses N-terminal N-formyl-L-methionyl-[peptide] + H2O = N-terminal L-methionyl-[peptide] + formate. Functionally, removes the formyl group from the N-terminal Met of newly synthesized proteins. Requires at least a dipeptide for an efficient rate of reaction. N-terminal L-methionine is a prerequisite for activity but the enzyme has broad specificity at other positions. This Bacteroides thetaiotaomicron (strain ATCC 29148 / DSM 2079 / JCM 5827 / CCUG 10774 / NCTC 10582 / VPI-5482 / E50) protein is Peptide deformylase.